We begin with the raw amino-acid sequence, 208 residues long: ATP-dependent Clp protease proteolytic subunit (208 aa).

Residue S105 is the Nucleophile of the active site. The active site involves H130.

It belongs to the peptidase S14 family. As to quaternary structure, fourteen ClpP subunits assemble into 2 heptameric rings which stack back to back to give a disk-like structure with a central cavity, resembling the structure of eukaryotic proteasomes.

It is found in the cytoplasm. It catalyses the reaction Hydrolysis of proteins to small peptides in the presence of ATP and magnesium. alpha-casein is the usual test substrate. In the absence of ATP, only oligopeptides shorter than five residues are hydrolyzed (such as succinyl-Leu-Tyr-|-NHMec, and Leu-Tyr-Leu-|-Tyr-Trp, in which cleavage of the -Tyr-|-Leu- and -Tyr-|-Trp bonds also occurs).. Its function is as follows. Cleaves peptides in various proteins in a process that requires ATP hydrolysis. Has a chymotrypsin-like activity. Plays a major role in the degradation of misfolded proteins. This is ATP-dependent Clp protease proteolytic subunit from Xanthomonas axonopodis pv. citri (strain 306).